A 191-amino-acid polypeptide reads, in one-letter code: MSKNRLPAYPALANELRTASLGINPAELQGLLTGMLSGGLSLNDKSWQALVFDYTNDGMGWPIGALASAEQILLAMSAQLVDTDFELSLLLPEGEGEEALFELADAVAEWINHFISGLGLSGANLKHASVEAKEALEDLEEMSKLGIDEEDDLAEQAELLEQVIEHIKACVLVLHAEFGVKPEQDTKPTVH.

It belongs to the UPF0149 family.

The protein is UPF0149 protein VC_2476 of Vibrio cholerae serotype O1 (strain ATCC 39315 / El Tor Inaba N16961).